Reading from the N-terminus, the 259-residue chain is UPF0246 protein NMA1114 (259 aa).

Belongs to the UPF0246 family.

This chain is UPF0246 protein NMA1114, found in Neisseria meningitidis serogroup A / serotype 4A (strain DSM 15465 / Z2491).